The sequence spans 339 residues: Dihydroorotate dehydrogenase (quinone) (339 aa).

Residues 61–65 and Thr-85 each bind FMN; that span reads AGLDK. Lys-65 contributes to the substrate binding site. 110–114 is a binding site for substrate; the sequence is NRMGF. FMN-binding residues include Asn-138 and Asn-171. Asn-171 is a substrate binding site. Catalysis depends on Ser-174, which acts as the Nucleophile. Residue Asn-176 coordinates substrate. FMN-binding residues include Lys-216 and Thr-244. Position 245-246 (245-246) interacts with substrate; the sequence is NT. Residues Gly-267, Gly-296, and 317–318 contribute to the FMN site; that span reads YS.

It belongs to the dihydroorotate dehydrogenase family. Type 2 subfamily. As to quaternary structure, monomer. Requires FMN as cofactor.

It is found in the cell membrane. The enzyme catalyses (S)-dihydroorotate + a quinone = orotate + a quinol. The protein operates within pyrimidine metabolism; UMP biosynthesis via de novo pathway; orotate from (S)-dihydroorotate (quinone route): step 1/1. In terms of biological role, catalyzes the conversion of dihydroorotate to orotate with quinone as electron acceptor. In Pseudomonas fluorescens (strain Pf0-1), this protein is Dihydroorotate dehydrogenase (quinone).